The primary structure comprises 1025 residues: DNA ligase 4 (1025 aa).

The tract at residues 1–36 is disordered; the sequence is MMQPTPAPSSAPGSPQRTQAEPEMETPSYPQPPQNV. Residues glutamate 289, lysine 291, leucine 292, arginine 296, glutamate 349, phenylalanine 387, glutamate 447, lysine 452, lysine 469, and lysine 471 each coordinate ATP. The N6-AMP-lysine intermediate role is filled by lysine 291. Position 349 (glutamate 349) interacts with Mg(2+). Glutamate 447 is a binding site for Mg(2+). The region spanning 667-763 is the BRCT 1 domain; it reads VKTDIFNGMK…EPAPFKKKYF (97 aa). The disordered stretch occupies residues 773-904; it reads ADEYNEDDGE…TTPDVDGDVK (132 aa). 2 stretches are compositionally biased toward acidic residues: residues 775–785 and 806–816; these read EYNEDDGEEEG and SETEDEDEEQA. Basic and acidic residues predominate over residues 817–838; the sequence is PEIKEEQDGELHEWLKVDDRKS. Positions 845-870 are enriched in acidic residues; that stretch reads DEEDSVTEDDSDNADVADEEEPDLDD. Residues 891–904 show a composition bias toward basic and acidic residues; that stretch reads RHRETTPDVDGDVK. Residues 915–1025 form the BRCT 2 domain; sequence DPDVIFKHLC…TLLDEEEFAP (111 aa).

It belongs to the ATP-dependent DNA ligase family. Mg(2+) serves as cofactor.

The protein resides in the nucleus. It catalyses the reaction ATP + (deoxyribonucleotide)n-3'-hydroxyl + 5'-phospho-(deoxyribonucleotide)m = (deoxyribonucleotide)n+m + AMP + diphosphate.. Functionally, DNA ligase involved in DNA non-homologous end joining (NHEJ); required for double-strand break (DSB) repair. In Coprinopsis cinerea (Inky cap fungus), this protein is DNA ligase 4 (LIG4).